The primary structure comprises 175 residues: RNA pyrophosphohydrolase (175 aa).

The 144-residue stretch at 6 to 149 folds into the Nudix hydrolase domain; sequence GYRPNVGIVI…KRDVYRRVMK (144 aa). Positions 38–59 match the Nudix box motif; that stretch reads GGINPGETPEQAMYRELFEEVG.

It belongs to the Nudix hydrolase family. RppH subfamily. A divalent metal cation serves as cofactor.

Accelerates the degradation of transcripts by removing pyrophosphate from the 5'-end of triphosphorylated RNA, leading to a more labile monophosphorylated state that can stimulate subsequent ribonuclease cleavage. The sequence is that of RNA pyrophosphohydrolase from Yersinia enterocolitica serotype O:8 / biotype 1B (strain NCTC 13174 / 8081).